The chain runs to 898 residues: DNA gyrase subunit A (898 aa).

2 disordered regions span residues 1–22 (MSDD…DDDS) and 36–56 (EEEK…EKEG). The Topo IIA-type catalytic domain maps to 97–562 (LPDARDGLKP…VMSSINNEDL (466 aa)). Y185 serves as the catalytic O-(5'-phospho-DNA)-tyrosine intermediate. A GyrA-box motif is present at residues 589 to 595 (QRRGGVG).

This sequence belongs to the type II topoisomerase GyrA/ParC subunit family. In terms of assembly, heterotetramer, composed of two GyrA and two GyrB chains. In the heterotetramer, GyrA contains the active site tyrosine that forms a transient covalent intermediate with DNA, while GyrB binds cofactors and catalyzes ATP hydrolysis.

It localises to the cytoplasm. The enzyme catalyses ATP-dependent breakage, passage and rejoining of double-stranded DNA.. Functionally, a type II topoisomerase that negatively supercoils closed circular double-stranded (ds) DNA in an ATP-dependent manner to modulate DNA topology and maintain chromosomes in an underwound state. Negative supercoiling favors strand separation, and DNA replication, transcription, recombination and repair, all of which involve strand separation. Also able to catalyze the interconversion of other topological isomers of dsDNA rings, including catenanes and knotted rings. Type II topoisomerases break and join 2 DNA strands simultaneously in an ATP-dependent manner. This chain is DNA gyrase subunit A, found in Metamycoplasma arthritidis (strain 158L3-1) (Mycoplasma arthritidis).